The chain runs to 205 residues: Golgi to ER traffic protein 1 (205 aa).

The Lumenal portion of the chain corresponds to 1 to 9 (MFELQPSSI). A helical membrane pass occupies residues 10–29 (VVLVFCVLAIKVCISLIGKT). Residues 30–116 (TIQDRIWYLY…QISKLVNLAI (87 aa)) are Cytoplasmic-facing. The stretch at 53–103 (ALAQKREELVRVNKERRAISAQDEYAKWTKLNRQFDKLNSEVNDLAEATSS) forms a coiled coil. The helical transmembrane segment at 117–137 (AATTTAPIWFSRIWYRKVVLF) threads the bilayer. The Lumenal segment spans residues 138 to 161 (YLPPKVFPYYIEWVLALPFIVTGG). Residues 162 to 178 (VGLTVWMFALNSVLSSL) traverse the membrane as a helical segment. At 179-205 (EFLIKFYLEEPVKKPEAPAASEAQTKQ) the chain is on the cytoplasmic side.

The protein belongs to the WRB/GET1 family. In terms of assembly, component of the Golgi to ER traffic (GET) complex, which is composed of GET1, GET2 and GET3. Within the complex, GET1 and GET2 form a heterotetramer which is stabilized by phosphatidylinositol binding and which binds to the GET3 homodimer.

Its subcellular location is the endoplasmic reticulum membrane. The protein localises to the golgi apparatus membrane. In terms of biological role, required for the post-translational delivery of tail-anchored (TA) proteins to the endoplasmic reticulum. Together with GET2, acts as a membrane receptor for soluble GET3, which recognizes and selectively binds the transmembrane domain of TA proteins in the cytosol. The GET complex cooperates with the HDEL receptor ERD2 to mediate the ATP-dependent retrieval of resident ER proteins that contain a C-terminal H-D-E-L retention signal from the Golgi to the ER. The protein is Golgi to ER traffic protein 1 of Clavispora lusitaniae (strain ATCC 42720) (Yeast).